The following is a 1675-amino-acid chain: Clathrin heavy chain 1 (1675 aa).

The residue at position 2 (Ala2) is an N-acetylalanine. The globular terminal domain stretch occupies residues 2–479 (AQILPIRFQE…VDPTLALSVY (478 aa)). 7 WD40-like repeat regions span residues 24–67 (NIGF…RPIS), 68–107 (ADSAIMNPASKVIALKAGKTLQIFNIEMKSKMKAHTMTDD), 108–149 (VTFW…SSLA), 150–195 (GCQI…QPIE), 196–257 (GHAA…PEAQ), 258–301 (NDFP…ISGE), and 302–330 (TIFVTAPHEATAGIIGVNRKGQVLSVCVE). At Ser67 the chain carries Phosphoserine. The residue at position 105 (Thr105) is a Phosphothreonine. Tyr184 bears the Phosphotyrosine mark. Thr394 is modified (phosphothreonine). The interval 449–465 (EKWLKEDKLECSEELGD) is binding site for the uncoating ATPase, involved in lattice disassembly. The segment at 480-523 (LRANVPNKVIQCFAETGQVQKIVLYAKKVGYTPDWIFLLRNVMR) is flexible linker. Residues 524-634 (ISPDQGQQFA…RALEHFTDLY (111 aa)) form a distal segment region. The interval 524–1675 (ISPDQGQQFA…QPQPGFGYSM (1152 aa)) is heavy chain arm. 7 CHCR repeats span residues 537–683 (VQDE…QIWV), 686–828 (ASKY…SEDV), 833–972 (ILVV…PLID), 979–1124 (LSET…VKEA), 1128–1269 (YIKA…FRLA), 1274–1420 (LHIV…LLLN), and 1423–1566 (LMVL…RECF). Tyr634 is modified (phosphotyrosine). The proximal segment stretch occupies residues 639-1675 (AVVHTHLLNP…QPQPGFGYSM (1037 aa)). Lys737 carries the post-translational modification N6-succinyllysine. Lys856 carries the post-translational modification N6-acetyllysine. Tyr899 is subject to Phosphotyrosine. The residue at position 1167 (Ser1167) is a Phosphoserine. Tyr1206 bears the Phosphotyrosine mark. Residues 1213-1522 (AAKLLYNNVS…YLFKGNNRWK (310 aa)) form an involved in binding clathrin light chain region. Ser1229 is subject to Phosphoserine. Residue Lys1441 is modified to N6-acetyllysine; alternate. Position 1441 is an N6-succinyllysine; alternate (Lys1441). A phosphotyrosine mark is found at Tyr1477 and Tyr1487. Ser1494 carries the post-translational modification Phosphoserine. Lys1501 carries the N6-acetyllysine modification. Residues 1550-1675 (AEELLQWFLQ…QPQPGFGYSM (126 aa)) form a trimerization region.

It belongs to the clathrin heavy chain family. Clathrin triskelions, composed of 3 heavy chains and 3 light chains, are the basic subunits of the clathrin coat. In the presence of light chains, hub assembly is influenced by both the pH and the concentration of calcium. Interacts with HIP1. Interacts with DENND1A, DENND1B and DENND1C. Interacts with OCRL. Interacts with ERBB2. Interacts with FKBP6. Interacts with CKAP5 and TACC3 forming the TACC3/ch-TOG/clathrin complex located at spindle inter-microtubules bridges; the complex implicates clathrin triskelions; TACC3 and CLTC are proposed to form a composite microtubule interaction surface. Interacts with ATG16L1 (via N-terminus). Interacts with RFTN1; the interaction occurs in response to pathogens. Interacts with USP2 isoform 2. Interacts with TMEM106B (via N-terminus). Interacts with DNAJC6; this interaction produces a local change in heavy-chain contacts, creating a detectable global distortion of the clathrin coat and leads to the recruitment of HSPA8.

It localises to the cytoplasmic vesicle membrane. The protein resides in the membrane. The protein localises to the coated pit. Its subcellular location is the melanosome. It is found in the cytoplasm. It localises to the cytoskeleton. The protein resides in the spindle. In terms of biological role, clathrin is the major protein of the polyhedral coat of coated pits and vesicles. Two different adapter protein complexes link the clathrin lattice either to the plasma membrane or to the trans-Golgi network. Acts as a component of the TACC3/ch-TOG/clathrin complex proposed to contribute to stabilization of kinetochore fibers of the mitotic spindle by acting as inter-microtubule bridge. The TACC3/ch-TOG/clathrin complex is required for the maintenance of kinetochore fiber tension. Plays a role in early autophagosome formation. Interaction with DNAJC6 mediates the recruitment of HSPA8 to the clathrin lattice and creates local destabilization of the lattice promoting uncoating. The sequence is that of Clathrin heavy chain 1 from Rattus norvegicus (Rat).